The chain runs to 303 residues: Acetylglutamate kinase (303 aa).

Residues 68–69, R90, and N194 contribute to the substrate site; that span reads GG.

The protein belongs to the acetylglutamate kinase family. ArgB subfamily.

It localises to the cytoplasm. The enzyme catalyses N-acetyl-L-glutamate + ATP = N-acetyl-L-glutamyl 5-phosphate + ADP. Its pathway is amino-acid biosynthesis; L-arginine biosynthesis; N(2)-acetyl-L-ornithine from L-glutamate: step 2/4. Its function is as follows. Catalyzes the ATP-dependent phosphorylation of N-acetyl-L-glutamate. In Psychrobacter arcticus (strain DSM 17307 / VKM B-2377 / 273-4), this protein is Acetylglutamate kinase.